Consider the following 216-residue polypeptide: uncharacterized protein (216 aa).

Its subcellular location is the plastid. The protein localises to the chloroplast. This is an uncharacterized protein from Pyropia yezoensis (Susabi-nori).